A 262-amino-acid polypeptide reads, in one-letter code: Snake venom serine protease (262 aa).

An N-terminal signal peptide occupies residues 1–18 (MVLIRVLANLLILQLSYA). The propeptide occupies 19-24 (QKSSEL). The region spanning 25–253 (VIGGDECNIN…YTEWIQSIIA (229 aa)) is the Peptidase S1 domain. 6 disulfide bridges follow: cysteine 31-cysteine 167, cysteine 50-cysteine 66, cysteine 102-cysteine 260, cysteine 146-cysteine 214, cysteine 178-cysteine 193, and cysteine 204-cysteine 229. Catalysis depends on charge relay system residues histidine 65 and aspartate 114. N-linked (GlcNAc...) asparagine glycans are attached at residues asparagine 125 and asparagine 158. Serine 208 serves as the catalytic Charge relay system.

This sequence belongs to the peptidase S1 family. Snake venom subfamily. Monomer. Expressed by the venom gland.

The protein localises to the secreted. Snake venom serine protease that may act in the hemostasis system of the prey. The sequence is that of Snake venom serine protease from Crotalus durissus durissus (Central American rattlesnake).